Here is a 447-residue protein sequence, read N- to C-terminus: Elongation factor 1-alpha (447 aa).

Residues 5 to 230 (KFHINIVVIG…DQINDAKRPS (226 aa)) form the tr-type G domain. Positions 14–21 (GHVDSGKS) are G1. A GTP-binding site is contributed by 14 to 21 (GHVDSGKS). Lys-55 carries the post-translational modification N6,N6-dimethyllysine. Residues 70 to 74 (GITID) are G2. Lys-79 carries the N6,N6,N6-trimethyllysine modification. The G3 stretch occupies residues 91-94 (DAPG). GTP contacts are provided by residues 91–95 (DAPGH) and 153–156 (NKMD). Residues 153–156 (NKMD) form a G4 region. The residue at position 187 (Lys-187) is an N6,N6,N6-trimethyllysine. The tract at residues 194–196 (SGF) is G5. Lys-261 carries the post-translational modification N6-methyllysine. The residue at position 289 (Glu-289) is a 5-glutamyl glycerylphosphorylethanolamine. Lys-306 bears the N6,N6,N6-trimethyllysine mark. 5-glutamyl glycerylphosphorylethanolamine is present on Glu-362. The residue at position 396 (Lys-396) is an N6,N6,N6-trimethyllysine.

Belongs to the TRAFAC class translation factor GTPase superfamily. Classic translation factor GTPase family. EF-Tu/EF-1A subfamily. As to expression, was detected in all tissues examined but was most abundant in roots and salt-adapted cultured cells.

The protein localises to the cytoplasm. Functionally, this protein promotes the GTP-dependent binding of aminoacyl-tRNA to the A-site of ribosomes during protein biosynthesis. In Nicotiana tabacum (Common tobacco), this protein is Elongation factor 1-alpha.